The primary structure comprises 1027 residues: MDLNGDAGAKRKRSSIVPAERPAKHLKPESSALTPGDSTPANGTVYDIEDEDDASRLLPIGPAQADSPEWQATIEEVVKSVVSIHFCQTCSFDTELSMSSQATGFVVDAERGYILTNRHVVCPGPFWGYCIFDNHEECDVRPVYRDPVHDFGILKFDPKAIRYMNLTELKLQPDAARVGSEIRVVGNDAGEKLSILSGVISRLDRNAPEYGEGYSDFNTNYIQAAAAASGGSSGSPVVNIDGHAIALQAGGRADGAATDYFLPLDRPLRALECIRRGEPVTRGTIQTQWILKPFDECRRLGLTPEWEATVRKAAPTETSMLVAEIILPEGPADGKLEEGDVLLQVNGELLTQFIRLDDILDSSVGQTVRLLVQRGGQDVEIECQVGDLHAITPDRFVTVAGGTFHDLSYQQSRLYAIATRGVYVCEAAGSFKLENTLSGWLIDSVDKRPTRNLDEFVEVMKTIPDRSRVVISYRHIRDLHTRGTSIVYIDRHWHPKMRLAVRNDETGLWDFSDLADALPALPPVPRKADFIQLDGVSQPAASEIVRSFVRVSCTMPLKLDGYPQAKKTGFGLVVDAEKGLVVVSRAIVPYDLCDINITVADSIIVNAKVVFLHPLQNYTIIQYDPSLVQAPVQSAKLSTEYIKQGQDTIFVGFNQNFRIVVAKTAVTDITTVSIPANASAPRYRAINLDAVTVDTGLSGQCSNGVLIGEDGVVQALWLNYLGERTPSSHKDVEYHLGFATPSLLPVVSKIQQGVMPELRILNMESYVVQMSQARIMGVSEEWIEKVTQANPSRHQLFMVRKVDCPPAGFDNMADTFQEGDILLTLDGQLITRVSELDVMYDKEFLEALIVRNGQEMRIQVPTVPTADLETDRAVVFCGAVLQKPHHAVRQQISKLHSEIYVSARSRGSPSYQYGLSPTNFITAVNGVPTPDLDRFVKEVSKIPDNTYFRLRAVTFDNVPWVVTMKKNDHYFPMSEYLKDPSQPCGWRTVSHNKSKHKDGIAPDAANLNPDAMEQGYDGASDIEPEAE.

The tract at residues 1–46 (MDLNGDAGAKRKRSSIVPAERPAKHLKPESSALTPGDSTPANGTVY) is disordered. A compositionally biased stretch (polar residues) spans 31-42 (SALTPGDSTPAN). Residues 81–265 (VVSIHFCQTC…AATDYFLPLD (185 aa)) form a serine protease region. Residues histidine 119, aspartate 150, and serine 232 each act as charge relay system in the active site. 2 PDZ domains span residues 288–373 (QWIL…LLVQ) and 875–956 (VFCG…VTFD). A disordered region spans residues 991-1027 (HNKSKHKDGIAPDAANLNPDAMEQGYDGASDIEPEAE).

It belongs to the peptidase S1C family.

It localises to the nucleus. In terms of biological role, nuclear serine protease which mediates apoptosis. The chain is Pro-apoptotic serine protease nma111 (nma111) from Aspergillus oryzae (strain ATCC 42149 / RIB 40) (Yellow koji mold).